The following is a 494-amino-acid chain: Ketol-acid reductoisomerase (NADP(+)) (494 aa).

The KARI N-terminal Rossmann domain maps to L14–S208. NADP(+)-binding positions include C45 to Q48, R68, R76, S78, and D108 to Q110. H132 is a catalytic residue. G158 is an NADP(+) binding site. KARI C-terminal knotted domains are found at residues S209 to D344 and S345 to M487. The Mg(2+) site is built by D217, E221, E389, and E393. S414 serves as a coordination point for substrate.

It belongs to the ketol-acid reductoisomerase family. Mg(2+) serves as cofactor.

It carries out the reaction (2R)-2,3-dihydroxy-3-methylbutanoate + NADP(+) = (2S)-2-acetolactate + NADPH + H(+). It catalyses the reaction (2R,3R)-2,3-dihydroxy-3-methylpentanoate + NADP(+) = (S)-2-ethyl-2-hydroxy-3-oxobutanoate + NADPH + H(+). It participates in amino-acid biosynthesis; L-isoleucine biosynthesis; L-isoleucine from 2-oxobutanoate: step 2/4. It functions in the pathway amino-acid biosynthesis; L-valine biosynthesis; L-valine from pyruvate: step 2/4. In terms of biological role, involved in the biosynthesis of branched-chain amino acids (BCAA). Catalyzes an alkyl-migration followed by a ketol-acid reduction of (S)-2-acetolactate (S2AL) to yield (R)-2,3-dihydroxy-isovalerate. In the isomerase reaction, S2AL is rearranged via a Mg-dependent methyl migration to produce 3-hydroxy-3-methyl-2-ketobutyrate (HMKB). In the reductase reaction, this 2-ketoacid undergoes a metal-dependent reduction by NADPH to yield (R)-2,3-dihydroxy-isovalerate. This is Ketol-acid reductoisomerase (NADP(+)) from Aliivibrio salmonicida (strain LFI1238) (Vibrio salmonicida (strain LFI1238)).